Here is a 177-residue protein sequence, read N- to C-terminus: Interleukin-7 (177 aa).

The N-terminal stretch at 1 to 25 (MFHVSFRYIFGLPPLILVLLPVASS) is a signal peptide. 3 disulfide bridges follow: C27–C166, C59–C154, and C72–C117. Residues N95, N116, and N141 are each glycosylated (N-linked (GlcNAc...) asparagine).

It belongs to the IL-7/IL-9 family. In terms of assembly, interacts with IL7R and CSF2RG.

The protein localises to the secreted. Its function is as follows. Hematopoietic cytokine that plays an essential role in the development, expansion, and survival of naive and memory T-cells and B-cells thereby regulating the number of mature lymphocytes and maintaining lymphoid homeostasis. Mechanistically, exerts its biological effects through a receptor composed of IL7RA subunit and the cytokine receptor common subunit gamma/CSF2RG. Binding to the receptor leads to activation of various kinases including JAK1 or JAK3 depending on the cell type and subsequently propagation of signals through activation of several downstream signaling pathways including the PI3K/Akt/mTOR or the JAK-STAT5. This chain is Interleukin-7 (IL7), found in Homo sapiens (Human).